We begin with the raw amino-acid sequence, 430 residues long: Glutamate-1-semialdehyde 2,1-aminomutase (430 aa).

The residue at position 265 (Lys-265) is an N6-(pyridoxal phosphate)lysine.

It belongs to the class-III pyridoxal-phosphate-dependent aminotransferase family. HemL subfamily. Homodimer. Pyridoxal 5'-phosphate is required as a cofactor.

The protein localises to the cytoplasm. It catalyses the reaction (S)-4-amino-5-oxopentanoate = 5-aminolevulinate. The protein operates within porphyrin-containing compound metabolism; protoporphyrin-IX biosynthesis; 5-aminolevulinate from L-glutamyl-tRNA(Glu): step 2/2. The sequence is that of Glutamate-1-semialdehyde 2,1-aminomutase from Shewanella sp. (strain MR-4).